Reading from the N-terminus, the 473-residue chain is Glutamine synthetase (473 aa).

In terms of domain architecture, GS beta-grasp spans 18–102 (NNIKWVDLQF…VLTKVFWGGG (85 aa)). The 364-residue stretch at 110–473 (PRGIAEEAEK…PMEIYQYLDS (364 aa)) folds into the GS catalytic domain. Mg(2+)-binding residues include Glu-133 and Glu-135. An ATP-binding site is contributed by Glu-207. Mg(2+) is bound by residues Glu-212 and Glu-220. L-glutamate is bound by residues 264–265 (NG) and Gly-265. His-269 provides a ligand contact to Mg(2+). ATP is bound by residues 271 to 273 (HFS) and Ser-273. Residues Arg-324, Glu-330, and Arg-342 each contribute to the L-glutamate site. The ATP site is built by Arg-342, Arg-347, and Lys-357. Position 362 (Glu-362) interacts with Mg(2+). Position 364 (Arg-364) interacts with L-glutamate.

The protein belongs to the glutamine synthetase family. As to quaternary structure, oligomer of 12 subunits arranged in the form of two hexagons. Mg(2+) is required as a cofactor. Requires Mn(2+) as cofactor.

The protein localises to the cytoplasm. The catalysed reaction is L-glutamate + NH4(+) + ATP = L-glutamine + ADP + phosphate + H(+). With respect to regulation, strongly inhibited by glycine and L-alanine. AMP at 10 mM displays a very weak inhibitory effect. The activity of this enzyme is not controlled by adenylation. Functionally, probably involved in nitrogen metabolism via ammonium assimilation. Catalyzes the ATP-dependent biosynthesis of glutamine from glutamate and ammonia. The chain is Glutamine synthetase from Sulfolobus acidocaldarius (strain ATCC 33909 / DSM 639 / JCM 8929 / NBRC 15157 / NCIMB 11770).